The following is a 146-amino-acid chain: Hemoglobin subunit beta (146 aa).

Position 1 is an N-acetylvaline (Val-1). One can recognise a Globin domain in the interval 2–146 (HLTADEKTAV…VANALAHKYH (145 aa)). Thr-12 is modified (phosphothreonine). A Phosphoserine modification is found at Ser-44. Lys-59 bears the N6-acetyllysine mark. His-63 lines the heme b pocket. An N6-acetyllysine modification is found at Lys-82. His-92 is a heme b binding site. The residue at position 93 (Cys-93) is an S-nitrosocysteine. Lys-144 is modified (N6-acetyllysine).

Belongs to the globin family. In terms of assembly, heterotetramer of two alpha chains and two beta chains. As to expression, red blood cells.

Its function is as follows. Involved in oxygen transport from the lung to the various peripheral tissues. The chain is Hemoglobin subunit beta (HBB) from Procyon lotor (Raccoon).